Reading from the N-terminus, the 464-residue chain is Antithrombin-III (464 aa).

An N-terminal signal peptide occupies residues 1–32 (MYSNVIGTVTSGKRKVYLLSLLLIGFWDCVTC). Intrachain disulfides connect C40/C160 and C53/C127. Residue T63 is modified to Phosphothreonine; by FAM20C. S68 is modified (phosphoserine; by FAM20C). Position 81 (W81) interacts with heparin. N-linked (GlcNAc...) asparagine glycosylation is present at N128. Heparin is bound at residue R161. Residue N167 is glycosylated (N-linked (GlcNAc...) asparagine). R177 is a binding site for heparin. Residue N187 is glycosylated (N-linked (GlcNAc...) (complex) asparagine). The N-linked (GlcNAc...) asparagine glycan is linked to N224. An intrachain disulfide couples C279 to C462.

It belongs to the serpin family. As to quaternary structure, forms protease inhibiting heterodimer with TMPRSS7. Post-translationally, phosphorylated by FAM20C in the extracellular medium. Found in plasma.

The protein localises to the secreted. It is found in the extracellular space. Its function is as follows. Most important serine protease inhibitor in plasma that regulates the blood coagulation cascade. AT-III inhibits thrombin, matriptase-3/TMPRSS7, as well as factors IXa, Xa and XIa. Its inhibitory activity is greatly enhanced in the presence of heparin. This is Antithrombin-III (SERPINC1) from Homo sapiens (Human).